A 207-amino-acid chain; its full sequence is Ribosome maturation factor RimP (207 aa).

Residues 171 to 207 (RAPGGAPEEGEEDTTEAAPEGAGKSPKPGRRPARKTH) are disordered. Basic residues predominate over residues 197–207 (KPGRRPARKTH).

It belongs to the RimP family.

The protein resides in the cytoplasm. Its function is as follows. Required for maturation of 30S ribosomal subunits. The sequence is that of Ribosome maturation factor RimP from Gluconacetobacter diazotrophicus (strain ATCC 49037 / DSM 5601 / CCUG 37298 / CIP 103539 / LMG 7603 / PAl5).